Consider the following 381-residue polypeptide: 8-amino-7-oxononanoate synthase (381 aa).

R27 contacts substrate. 105 to 106 (GY) contacts pyridoxal 5'-phosphate. Residue H130 participates in substrate binding. Residues S176, 201–204 (DEAH), and 232–235 (TLSK) contribute to the pyridoxal 5'-phosphate site. The residue at position 235 (K235) is an N6-(pyridoxal phosphate)lysine. A substrate-binding site is contributed by T345.

It belongs to the class-II pyridoxal-phosphate-dependent aminotransferase family. BioF subfamily. As to quaternary structure, homodimer. Pyridoxal 5'-phosphate serves as cofactor.

It carries out the reaction 6-carboxyhexanoyl-[ACP] + L-alanine + H(+) = (8S)-8-amino-7-oxononanoate + holo-[ACP] + CO2. The protein operates within cofactor biosynthesis; biotin biosynthesis. Its function is as follows. Catalyzes the decarboxylative condensation of pimeloyl-[acyl-carrier protein] and L-alanine to produce 8-amino-7-oxononanoate (AON), [acyl-carrier protein], and carbon dioxide. This chain is 8-amino-7-oxononanoate synthase, found in Mycolicibacterium paratuberculosis (strain ATCC BAA-968 / K-10) (Mycobacterium paratuberculosis).